Reading from the N-terminus, the 359-residue chain is Protein LpfD (359 aa).

Positions methionine 1–alanine 24 are cleaved as a signal peptide.

This sequence belongs to the fimbrial protein family.

The protein resides in the fimbrium. The polypeptide is Protein LpfD (lpfD) (Salmonella typhimurium (strain LT2 / SGSC1412 / ATCC 700720)).